A 594-amino-acid chain; its full sequence is Arginine--tRNA ligase (594 aa).

Residues 139–149 carry the 'HIGH' region motif; sequence ANPTGPLHVGH.

The protein belongs to the class-I aminoacyl-tRNA synthetase family. In terms of assembly, monomer.

The protein resides in the cytoplasm. It catalyses the reaction tRNA(Arg) + L-arginine + ATP = L-arginyl-tRNA(Arg) + AMP + diphosphate. This chain is Arginine--tRNA ligase, found in Paraburkholderia phymatum (strain DSM 17167 / CIP 108236 / LMG 21445 / STM815) (Burkholderia phymatum).